The primary structure comprises 237 residues: Ribose-5-phosphate isomerase A (237 aa).

Residues 28–31 (SGST), 83–86 (DGAD), and 97–100 (KGRG) each bind substrate. The Proton acceptor role is filled by glutamate 106. Lysine 124 contributes to the substrate binding site.

The protein belongs to the ribose 5-phosphate isomerase family. In terms of assembly, homodimer.

It catalyses the reaction aldehydo-D-ribose 5-phosphate = D-ribulose 5-phosphate. The protein operates within carbohydrate degradation; pentose phosphate pathway; D-ribose 5-phosphate from D-ribulose 5-phosphate (non-oxidative stage): step 1/1. Functionally, catalyzes the reversible conversion of ribose-5-phosphate to ribulose 5-phosphate. In Thermomicrobium roseum (strain ATCC 27502 / DSM 5159 / P-2), this protein is Ribose-5-phosphate isomerase A.